Here is a 91-residue protein sequence, read N- to C-terminus: ATP synthase subunit c (91 aa).

2 helical membrane-spanning segments follow: residues 4–24 and 53–73; these read FTMCVLAAGIGMALGTLGTGI and IGLAMIESLAIYALVVCLIIL.

It belongs to the ATPase C chain family. As to quaternary structure, F-type ATPases have 2 components, F(1) - the catalytic core - and F(0) - the membrane proton channel. F(1) has five subunits: alpha(3), beta(3), gamma(1), delta(1), epsilon(1). F(0) has three main subunits: a(1), b(2) and c(10-14). The alpha and beta chains form an alternating ring which encloses part of the gamma chain. F(1) is attached to F(0) by a central stalk formed by the gamma and epsilon chains, while a peripheral stalk is formed by the delta and b chains.

It is found in the cell inner membrane. In terms of biological role, f(1)F(0) ATP synthase produces ATP from ADP in the presence of a proton or sodium gradient. F-type ATPases consist of two structural domains, F(1) containing the extramembraneous catalytic core and F(0) containing the membrane proton channel, linked together by a central stalk and a peripheral stalk. During catalysis, ATP synthesis in the catalytic domain of F(1) is coupled via a rotary mechanism of the central stalk subunits to proton translocation. Key component of the F(0) channel; it plays a direct role in translocation across the membrane. A homomeric c-ring of between 10-14 subunits forms the central stalk rotor element with the F(1) delta and epsilon subunits. The polypeptide is ATP synthase subunit c (Citrifermentans bemidjiense (strain ATCC BAA-1014 / DSM 16622 / JCM 12645 / Bem) (Geobacter bemidjiensis)).